A 305-amino-acid chain; its full sequence is UDP-3-O-acyl-N-acetylglucosamine deacetylase (305 aa).

Zn(2+) contacts are provided by histidine 79, histidine 238, and aspartate 242. Histidine 265 serves as the catalytic Proton donor.

Belongs to the LpxC family. Zn(2+) is required as a cofactor.

The catalysed reaction is a UDP-3-O-[(3R)-3-hydroxyacyl]-N-acetyl-alpha-D-glucosamine + H2O = a UDP-3-O-[(3R)-3-hydroxyacyl]-alpha-D-glucosamine + acetate. It participates in glycolipid biosynthesis; lipid IV(A) biosynthesis; lipid IV(A) from (3R)-3-hydroxytetradecanoyl-[acyl-carrier-protein] and UDP-N-acetyl-alpha-D-glucosamine: step 2/6. Its function is as follows. Catalyzes the hydrolysis of UDP-3-O-myristoyl-N-acetylglucosamine to form UDP-3-O-myristoylglucosamine and acetate, the committed step in lipid A biosynthesis. The protein is UDP-3-O-acyl-N-acetylglucosamine deacetylase of Shigella boydii serotype 18 (strain CDC 3083-94 / BS512).